A 107-amino-acid chain; its full sequence is Toluene 1,2-dioxygenase system ferredoxin subunit (107 aa).

A Rieske domain is found at 4-99 (TYILRQGDLP…IKVEGDEVHV (96 aa)). Cysteine 43, histidine 45, cysteine 62, and histidine 65 together coordinate [2Fe-2S] cluster.

Belongs to the bacterial ring-hydroxylating dioxygenase ferredoxin component family. As to quaternary structure, this dioxygenase system consists of four proteins: the two subunits of the hydroxylase component (todC1 and todC2), a ferredoxin (TodB) and a ferredoxin reductase (TodA).

It functions in the pathway xenobiotic degradation; toluene degradation. Its function is as follows. This protein seems to be a 2Fe-2S ferredoxin. The protein is Toluene 1,2-dioxygenase system ferredoxin subunit (todB) of Pseudomonas putida (strain ATCC 700007 / DSM 6899 / JCM 31910 / BCRC 17059 / LMG 24140 / F1).